The sequence spans 314 residues: tRNA dimethylallyltransferase (314 aa).

Residue 13-20 coordinates ATP; sequence GPTAVGKT. 15–20 serves as a coordination point for substrate; sequence TAVGKT. The segment at 38–41 is interaction with substrate tRNA; it reads DSMQ.

This sequence belongs to the IPP transferase family. In terms of assembly, monomer. The cofactor is Mg(2+).

The catalysed reaction is adenosine(37) in tRNA + dimethylallyl diphosphate = N(6)-dimethylallyladenosine(37) in tRNA + diphosphate. In terms of biological role, catalyzes the transfer of a dimethylallyl group onto the adenine at position 37 in tRNAs that read codons beginning with uridine, leading to the formation of N6-(dimethylallyl)adenosine (i(6)A). This chain is tRNA dimethylallyltransferase, found in Bacillus subtilis (strain 168).